The chain runs to 1295 residues: Phosphoribosylformylglycinamidine synthase (1295 aa).

Residues Trp305 to Lys327 are disordered. Residues Gly307–Asp318 and Ala678 each bind ATP. 3 residues coordinate Mg(2+): Glu718, Asn722, and Asp884. Ser886 contacts ATP. Positions Val1042–Gly1295 constitute a Glutamine amidotransferase type-1 domain. The active-site Nucleophile is the Cys1135. Residues His1260 and Glu1262 contribute to the active site.

This sequence in the N-terminal section; belongs to the FGAMS family. Monomer.

It is found in the cytoplasm. The catalysed reaction is N(2)-formyl-N(1)-(5-phospho-beta-D-ribosyl)glycinamide + L-glutamine + ATP + H2O = 2-formamido-N(1)-(5-O-phospho-beta-D-ribosyl)acetamidine + L-glutamate + ADP + phosphate + H(+). Its pathway is purine metabolism; IMP biosynthesis via de novo pathway; 5-amino-1-(5-phospho-D-ribosyl)imidazole from N(2)-formyl-N(1)-(5-phospho-D-ribosyl)glycinamide: step 1/2. Functionally, phosphoribosylformylglycinamidine synthase involved in the purines biosynthetic pathway. Catalyzes the ATP-dependent conversion of formylglycinamide ribonucleotide (FGAR) and glutamine to yield formylglycinamidine ribonucleotide (FGAM) and glutamate. This Shigella boydii serotype 4 (strain Sb227) protein is Phosphoribosylformylglycinamidine synthase.